Reading from the N-terminus, the 471-residue chain is 3-isopropylmalate dehydratase large subunit (471 aa).

Residues C351, C414, and C417 each coordinate [4Fe-4S] cluster.

Belongs to the aconitase/IPM isomerase family. LeuC type 1 subfamily. In terms of assembly, heterodimer of LeuC and LeuD. The cofactor is [4Fe-4S] cluster.

It carries out the reaction (2R,3S)-3-isopropylmalate = (2S)-2-isopropylmalate. It participates in amino-acid biosynthesis; L-leucine biosynthesis; L-leucine from 3-methyl-2-oxobutanoate: step 2/4. Its function is as follows. Catalyzes the isomerization between 2-isopropylmalate and 3-isopropylmalate, via the formation of 2-isopropylmaleate. In Colwellia psychrerythraea (strain 34H / ATCC BAA-681) (Vibrio psychroerythus), this protein is 3-isopropylmalate dehydratase large subunit.